The chain runs to 130 residues: Modulator protein MzrA (130 aa).

At 1–15 (MIAAFIKRHAPQRRL) the chain is on the cytoplasmic side. The helical transmembrane segment at 16-36 (SLWLALPVVALLALVMMPALF) threads the bilayer. Topologically, residues 37–130 (RHDSALQIRA…RISFKPQSIG (94 aa)) are periplasmic.

It belongs to the MzrA family. As to quaternary structure, interacts with EnvZ.

It is found in the cell inner membrane. Modulates the activity of the EnvZ/OmpR two-component regulatory system, probably by directly modulating EnvZ enzymatic activity and increasing stability of phosphorylated OmpR. This chain is Modulator protein MzrA, found in Erwinia tasmaniensis (strain DSM 17950 / CFBP 7177 / CIP 109463 / NCPPB 4357 / Et1/99).